A 229-amino-acid chain; its full sequence is uncharacterized protein (229 aa).

The segment at M61 to G229 is disordered. Residues Q109–P128 are compositionally biased toward basic and acidic residues. Residues Q166–P194 are compositionally biased toward low complexity. Positions E195 to P204 are enriched in acidic residues. Residues T218–G229 show a composition bias toward basic and acidic residues.

This is an uncharacterized protein from Frog virus 3 (isolate Goorha) (FV-3).